Here is a 929-residue protein sequence, read N- to C-terminus: LPS-assembly protein LptD (929 aa).

Residues 1 to 24 (MKLRFIRSAGWLFLLFCLACNARA) form the signal peptide. The disordered stretch occupies residues 26–208 (LPPLSSKPEQ…EAGDEKLRLA (183 aa)). Residues 44-74 (GDDKPVVIDTERIRGHHEYESGTRSESELRS) are compositionally biased toward basic and acidic residues. Residues 154–164 (RTQSAPRTLSA) are compositionally biased toward polar residues. The segment covering 181 to 208 (DQDRPGFAEGERIGGHREEAGDEKLRLA) has biased composition (basic and acidic residues).

The protein belongs to the LptD family. In terms of assembly, component of the lipopolysaccharide transport and assembly complex. Interacts with LptE and LptA.

The protein resides in the cell outer membrane. Functionally, together with LptE, is involved in the assembly of lipopolysaccharide (LPS) at the surface of the outer membrane. This is LPS-assembly protein LptD from Nitrosospira multiformis (strain ATCC 25196 / NCIMB 11849 / C 71).